The following is a 609-amino-acid chain: MSDIIAYKVDGEIVDTQSFKSLKNVKNAEEIYFDNSEDALKVIRHSCAHLMAQAILALYPNAKFFVGPAIEDGFYYDFRVTKENGEKLGKEDLQAIEKKMKEFIDAKEEIAKICSTKSEIANEFKNDDLKQEVLKRIPDGEVSVYKQGDFKDICRGPHVPNTKFLRFFKLTRVAGAYLGGDEKREMLTRIYGTAFADKENLNEYLRILEEAKKRDHRIIGNEMKLFTFDDQIGAGLPVWLPNGARMRSKLEKILFGVHRRRGYEPVRGPEILKADAWKISGHYTNYKENMYFTKIDEQEYGIKPMNCVGHIKVYQSEIRSYRDLPLKFFEYGVVHRHEKSGVMHGLFRVREFTQDDAHIFCMPSQIKENVLEILDFVDKIMKNFGFSYEMEISTKPEKAIGDDKVWEIATNALKEALDENGFKYGIDEGGGAFYGPKIDIKITDALKRKWQCGTIQVDFNLPSRFDLGYIDENNERKQPVMLHRAILGSFERFIGILIEHTAGELPFFIAPTGVSIIPINDAHLNYAKEVQKALANLEVDSEILSKNETLNKRIRTAEKGRVPMILVLGDNEVKNRSVALRDRRARAQSNLSLDEFLEFVKNKLNEVNF.

Residues 215 to 506 (DHRIIGNEMK…LIEHTAGELP (292 aa)) form a catalytic region. Zn(2+) is bound by residues Cys-307, His-358, and His-483.

This sequence belongs to the class-II aminoacyl-tRNA synthetase family. In terms of assembly, homodimer. Requires Zn(2+) as cofactor.

It localises to the cytoplasm. It carries out the reaction tRNA(Thr) + L-threonine + ATP = L-threonyl-tRNA(Thr) + AMP + diphosphate + H(+). Functionally, catalyzes the attachment of threonine to tRNA(Thr) in a two-step reaction: L-threonine is first activated by ATP to form Thr-AMP and then transferred to the acceptor end of tRNA(Thr). Also edits incorrectly charged L-seryl-tRNA(Thr). The sequence is that of Threonine--tRNA ligase from Campylobacter hominis (strain ATCC BAA-381 / DSM 21671 / CCUG 45161 / LMG 19568 / NCTC 13146 / CH001A).